A 341-amino-acid polypeptide reads, in one-letter code: GDP-mannose transporter GONST5 (341 aa).

Transmembrane regions (helical) follow at residues 17 to 37 (LSILQWWGFNVTVIIMNKWIF), 44 to 64 (FPLSVSCVHFICSSIGAYIVI), 89 to 109 (FVFCINIVLGNISLRYIPVSF), 141 to 161 (LVPIVGGILLTSITELSFNVF), 192 to 212 (INTVYYMAPFATMILGLPAFL), 233 to 253 (IILFNSGVLAFCLNFSIFYVI), 260 to 280 (TFNVAGNLKVAVAVFVSWMIF), and 284 to 304 (ISPMNAVGCGITLVGCTFYGY). In terms of domain architecture, EamA spans 33 to 152 (NKWIFQKLDF…PIVGGILLTS (120 aa)).

Belongs to the TPT transporter family. TPT (TC 2.A.7.9) subfamily. As to expression, expressed in rosette leaves, flowers and siliques.

It localises to the golgi apparatus membrane. Its function is as follows. GDP-mannose transporter that may be involved in the import of GDP-mannose from the cytoplasm into the Golgi lumen. The chain is GDP-mannose transporter GONST5 (GONST5) from Arabidopsis thaliana (Mouse-ear cress).